Here is a 189-residue protein sequence, read N- to C-terminus: MSDSSKEKKKKFADMVSRQKGDDQQSDNHKQTDDLNEDLNTLKERAVQLEDHLRRAVADNENVKRIMQKQISDASDYAVTKLARDMIDSCDNLKRVMEILKDGDPVHEGIKVAYQKIINDLKKHGIEEVDPLGELFDSNLHQAVVEREDNEKKPGTIVEVLQTGYTIKNRLLRPAMVILSKKSADCGSD.

Residues 1–37 are disordered; that stretch reads MSDSSKEKKKKFADMVSRQKGDDQQSDNHKQTDDLNE. Basic and acidic residues predominate over residues 17–33; sequence SRQKGDDQQSDNHKQTD.

It belongs to the GrpE family. In terms of assembly, homodimer.

Its subcellular location is the cytoplasm. Functionally, participates actively in the response to hyperosmotic and heat shock by preventing the aggregation of stress-denatured proteins, in association with DnaK and GrpE. It is the nucleotide exchange factor for DnaK and may function as a thermosensor. Unfolded proteins bind initially to DnaJ; upon interaction with the DnaJ-bound protein, DnaK hydrolyzes its bound ATP, resulting in the formation of a stable complex. GrpE releases ADP from DnaK; ATP binding to DnaK triggers the release of the substrate protein, thus completing the reaction cycle. Several rounds of ATP-dependent interactions between DnaJ, DnaK and GrpE are required for fully efficient folding. The chain is Protein GrpE from Wolbachia sp. subsp. Drosophila simulans (strain wRi).